The following is a 169-amino-acid chain: MTNLAFQSSSQIQGRLSAWLVTHKLPHRPLGFDYQGVETIEVRPEDWPSVAVALYVYGFNYLRCQCAYDVAPGGALASVYHLTKVEDVADQPEELCVKLFVSRNNPSVPSSFWIWKSADFQERECYDMFGIVYKNHPHLKRILMPESWLGWPLRKDYITPDFYELQDAY.

It belongs to the complex I 30 kDa subunit family. NDH is composed of at least 16 different subunits, 5 of which are encoded in the nucleus.

The protein resides in the plastid. The protein localises to the chloroplast thylakoid membrane. The catalysed reaction is a plastoquinone + NADH + (n+1) H(+)(in) = a plastoquinol + NAD(+) + n H(+)(out). It carries out the reaction a plastoquinone + NADPH + (n+1) H(+)(in) = a plastoquinol + NADP(+) + n H(+)(out). NDH shuttles electrons from NAD(P)H:plastoquinone, via FMN and iron-sulfur (Fe-S) centers, to quinones in the photosynthetic chain and possibly in a chloroplast respiratory chain. The immediate electron acceptor for the enzyme in this species is believed to be plastoquinone. Couples the redox reaction to proton translocation, and thus conserves the redox energy in a proton gradient. The protein is NAD(P)H-quinone oxidoreductase subunit J, chloroplastic of Zygnema circumcarinatum (Green alga).